We begin with the raw amino-acid sequence, 642 residues long: MDLGEIEKDFTKIDEYFFDACNIKSYNYNGTYYCCKNISSTHFTKLMYLIINEKNSTNGHQKIIKYLKKKINVKNPSRINRQNDEGWTALMIASITCGQWCSIETVRLLLEHGANPNIQEKNGLQLSGIKSQLAHIISLICKTMRQKNSNPENGFTALSLACAVLDTGESVEVVELLLKYGTNVDSINHNGETALIITCQNSKYFHSIFVIDLLLQNNANTLHKDNNGFTALIHAVSHCPLNIVKLLVKNGSDVNATDNEGKSVLMHSTKNSIDIVKYLLKKGAEINHKNNNDINVLFFASKNHVKSDVIMFLLAKCSNPNEINTNKNAVLAHVCRQFNHHKNDIDTVKILLENRANPNIIDDDSRTILMDICTDYQNENSLDIIEMLLKKGANVNATDIEGRTALNYACMSINNKITIKIIKLLLKYNINVNHVDNDGAHILIDLCRNYSRYSLKVVKLLLEHGADVNITFGNKKWTPLFFANENLFSSSEKDPERCTKLIDLLIHYGANVNAVGKYGNNILMEDTTRNLECPNSITKHLLEKKINVNHQNDNGDTSLLLVYERHELERAYSIAQFLLEHGCNPNIINKNEHNILTILNNDIFWNFEKVIPHFKLFLNYNFNPNIYQIYGCHFILINVLLI.

ANK repeat units lie at residues 42 to 76 (HFTK…VKNP), 85 to 118 (EGWT…NPNI), 153 to 186 (NGFT…NVDS), 190 to 224 (NGET…TLHK), 227 to 256 (NGFT…DVNA), 260 to 288 (EGKS…EINH), 292 to 322 (NDIN…NPNE), 326 to 360 (NKNA…NPNI), 365 to 397 (SRTI…NVNA), 401 to 434 (EGRT…NVNH), 438 to 470 (DGAH…DVNI), 475 to 514 (KKWT…NVNA), 518 to 550 (YGNN…NVNH), and 554 to 587 (NGDT…NPNI).

The polypeptide is Putative ankyrin repeat protein L91 (Acanthamoeba polyphaga (Amoeba)).